The following is a 201-amino-acid chain: Small ribosomal subunit protein uS4 (201 aa).

Residues 26–46 (LARRAYAPGDHGRDRRGKLSE) are disordered. Basic and acidic residues predominate over residues 35-44 (DHGRDRRGKL). The S4 RNA-binding domain maps to 93-156 (RRLDNMVYRL…KNLDIIKNAV (64 aa)).

It belongs to the universal ribosomal protein uS4 family. Part of the 30S ribosomal subunit. Contacts protein S5. The interaction surface between S4 and S5 is involved in control of translational fidelity.

One of the primary rRNA binding proteins, it binds directly to 16S rRNA where it nucleates assembly of the body of the 30S subunit. Its function is as follows. With S5 and S12 plays an important role in translational accuracy. This Limosilactobacillus reuteri (strain DSM 20016) (Lactobacillus reuteri) protein is Small ribosomal subunit protein uS4.